Here is a 67-residue protein sequence, read N- to C-terminus: DNA-directed RNA polymerase subunit omega (67 aa).

The protein belongs to the RNA polymerase subunit omega family. As to quaternary structure, the RNAP catalytic core consists of 2 alpha, 1 beta, 1 beta' and 1 omega subunit. When a sigma factor is associated with the core the holoenzyme is formed, which can initiate transcription.

It catalyses the reaction RNA(n) + a ribonucleoside 5'-triphosphate = RNA(n+1) + diphosphate. Functionally, promotes RNA polymerase assembly. Latches the N- and C-terminal regions of the beta' subunit thereby facilitating its interaction with the beta and alpha subunits. This Burkholderia ambifaria (strain MC40-6) protein is DNA-directed RNA polymerase subunit omega.